A 1454-amino-acid chain; its full sequence is ABC transporter G family member 43 (1454 aa).

The tract at residues Ala-23–Asp-47 is disordered. Basic and acidic residues predominate over residues Ser-25–Ala-44. The N-linked (GlcNAc...) asparagine glycan is linked to Asn-163. Positions Glu-170–Glu-444 constitute an ABC transporter 1 domain. Gly-204–Ser-211 lines the ATP pocket. N-linked (GlcNAc...) asparagine glycosylation occurs at Asn-393. The ABC transmembrane type-2 1 domain maps to Leu-524–Phe-735. A run of 6 helical transmembrane segments spans residues Phe-540 to Phe-560, Val-577 to Leu-597, Phe-613 to Leu-630, Leu-637 to Phe-656, Phe-659 to Ile-679, and Val-684 to Leu-704. N-linked (GlcNAc...) asparagine glycosylation is present at Asn-745. A helical membrane pass occupies residues Ile-775 to Phe-795. Residues Thr-804–Gln-823 are disordered. 2 N-linked (GlcNAc...) asparagine glycosylation sites follow: Asn-829 and Asn-832. The 253-residue stretch at Leu-852–Pro-1104 folds into the ABC transporter 2 domain. Gly-897–Thr-904 contacts ATP. The N-linked (GlcNAc...) asparagine glycan is linked to Asn-951. The ABC transmembrane type-2 2 domain maps to Gln-1178–Phe-1391. Transmembrane regions (helical) follow at residues Tyr-1196–Trp-1216, Tyr-1236–Val-1256, Phe-1284–Tyr-1304, Phe-1314–Ala-1334, Leu-1341–Ile-1361, Trp-1372–Ala-1392, and Phe-1423–Gly-1443.

Belongs to the ABC transporter superfamily. ABCG family. PDR (TC 3.A.1.205) subfamily. As to expression, specifically expressed in the vasculature of roots, stems, panicles, sheaths and leaves.

It is found in the cell membrane. Functionally, ABC transporter modulating cadmium (Cd) import, thus controlling Cd(2+) accumulation to prevent phytotoxicity. Confers high tolerance to Cd in yeast. Prevents leaf bacteria proliferation, such as Xanthomonas oryzae pv. oryzicola (Xoc) RS105 and X.oryzae pv. oryzae (Xoo) PXO99, by triggering Cd accumulation, which in turn impairs bacterial virulence factors. The polypeptide is ABC transporter G family member 43 (Oryza sativa subsp. japonica (Rice)).